A 173-amino-acid chain; its full sequence is Alkyl hydroperoxide reductase AhpD (173 aa).

The active-site Proton donor is the Cys-131. Cys-131 and Cys-134 are oxidised to a cystine. Cys-134 acts as the Cysteine sulfenic acid (-SOH) intermediate in catalysis.

It belongs to the AhpD family.

It carries out the reaction N(6)-[(R)-dihydrolipoyl]-L-lysyl-[lipoyl-carrier protein] + a hydroperoxide = N(6)-[(R)-lipoyl]-L-lysyl-[lipoyl-carrier protein] + an alcohol + H2O. Antioxidant protein with alkyl hydroperoxidase activity. Required for the reduction of the AhpC active site cysteine residues and for the regeneration of the AhpC enzyme activity. The polypeptide is Alkyl hydroperoxide reductase AhpD (Maricaulis maris (strain MCS10) (Caulobacter maris)).